The primary structure comprises 401 residues: uncharacterized protein (401 aa).

[4Fe-4S] cluster is bound by residues cysteine 7, cysteine 13, cysteine 16, and cysteine 94. The S-adenosyl-L-methionine site is built by glutamine 230, tyrosine 259, glutamate 280, and aspartate 328. Catalysis depends on cysteine 355, which acts as the Nucleophile.

Belongs to the class I-like SAM-binding methyltransferase superfamily. RNA M5U methyltransferase family.

This is an uncharacterized protein from Chlamydia pneumoniae (Chlamydophila pneumoniae).